Consider the following 205-residue polypeptide: Regulator of G-protein signaling 4 (205 aa).

S-palmitoyl cysteine attachment occurs at residues C2, C12, and C95. The region spanning 62-178 (SLENLISHEC…LKSRFYLDLV (117 aa)) is the RGS domain.

Palmitoylated on Cys-2 and/or Cys-12. Post-translationally, phosphorylated by cyclic GMP-dependent protein kinase.

Functionally, inhibits signal transduction by increasing the GTPase activity of G protein alpha subunits thereby driving them into their inactive GDP-bound form. Activity on G(z)-alpha is inhibited by phosphorylation of the G-protein. Activity on G(z)-alpha and G(i)-alpha-1 is inhibited by palmitoylation of the G-protein. In Bos taurus (Bovine), this protein is Regulator of G-protein signaling 4 (RGS4).